Reading from the N-terminus, the 154-residue chain is 6,7-dimethyl-8-ribityllumazine synthase (154 aa).

5-amino-6-(D-ribitylamino)uracil is bound by residues Phe26, 60–62 (ALE), and 84–86 (CII). Residue 89–90 (ET) coordinates (2S)-2-hydroxy-3-oxobutyl phosphate. His92 acts as the Proton donor in catalysis. Asn117 contributes to the 5-amino-6-(D-ribitylamino)uracil binding site. Arg131 lines the (2S)-2-hydroxy-3-oxobutyl phosphate pocket.

Belongs to the DMRL synthase family.

The catalysed reaction is (2S)-2-hydroxy-3-oxobutyl phosphate + 5-amino-6-(D-ribitylamino)uracil = 6,7-dimethyl-8-(1-D-ribityl)lumazine + phosphate + 2 H2O + H(+). Its pathway is cofactor biosynthesis; riboflavin biosynthesis; riboflavin from 2-hydroxy-3-oxobutyl phosphate and 5-amino-6-(D-ribitylamino)uracil: step 1/2. Functionally, catalyzes the formation of 6,7-dimethyl-8-ribityllumazine by condensation of 5-amino-6-(D-ribitylamino)uracil with 3,4-dihydroxy-2-butanone 4-phosphate. This is the penultimate step in the biosynthesis of riboflavin. The chain is 6,7-dimethyl-8-ribityllumazine synthase from Paracidovorax citrulli (strain AAC00-1) (Acidovorax citrulli).